The chain runs to 217 residues: Proteasome subunit beta (217 aa).

Positions 1–14 (MIANNDQYKEYMKG) are cleaved as a propeptide — removed in mature form; by autocatalysis. Thr15 serves as the catalytic Nucleophile.

It belongs to the peptidase T1B family. The 20S proteasome core is composed of 14 alpha and 14 beta subunits that assemble into four stacked heptameric rings, resulting in a barrel-shaped structure. The two inner rings, each composed of seven catalytic beta subunits, are sandwiched by two outer rings, each composed of seven alpha subunits. The catalytic chamber with the active sites is on the inside of the barrel. Has a gated structure, the ends of the cylinder being occluded by the N-termini of the alpha-subunits. Is capped at one or both ends by the proteasome regulatory ATPase, PAN.

Its subcellular location is the cytoplasm. It carries out the reaction Cleavage of peptide bonds with very broad specificity.. The formation of the proteasomal ATPase PAN-20S proteasome complex, via the docking of the C-termini of PAN into the intersubunit pockets in the alpha-rings, triggers opening of the gate for substrate entry. Interconversion between the open-gate and close-gate conformations leads to a dynamic regulation of the 20S proteasome proteolysis activity. Functionally, component of the proteasome core, a large protease complex with broad specificity involved in protein degradation. In Methanococcus aeolicus (strain ATCC BAA-1280 / DSM 17508 / OCM 812 / Nankai-3), this protein is Proteasome subunit beta.